We begin with the raw amino-acid sequence, 131 residues long: Cuticle protein 79, isoform A (131 aa).

A run of 3 repeats spans residues 37–40 (AAPA), 45–48 (AAPA), and 53–56 (AAPA).

Component of the cuticle of migratory locust which contains more than 100 different structural proteins. The protein is Cuticle protein 79, isoform A of Locusta migratoria (Migratory locust).